A 347-amino-acid chain; its full sequence is Isopentenyl-diphosphate delta-isomerase (347 aa).

A substrate-binding site is contributed by 5 to 6 (RK). Residues Ser61, 62–64 (SMT), Ser92, and Asn120 contribute to the FMN site. Position 92-94 (92-94 (SMR)) interacts with substrate. Residue Gln159 coordinates substrate. Glu160 is a binding site for Mg(2+). Residues Lys189, Ser214, Thr219, 269–271 (GLR), and 290–291 (AR) each bind FMN.

It belongs to the IPP isomerase type 2 family. Homooctamer. Dimer of tetramers. FMN serves as cofactor. The cofactor is NADPH. Mg(2+) is required as a cofactor.

It is found in the cytoplasm. It catalyses the reaction isopentenyl diphosphate = dimethylallyl diphosphate. Involved in the biosynthesis of isoprenoids. Catalyzes the 1,3-allylic rearrangement of the homoallylic substrate isopentenyl (IPP) to its allylic isomer, dimethylallyl diphosphate (DMAPP). The chain is Isopentenyl-diphosphate delta-isomerase from Thermoplasma volcanium (strain ATCC 51530 / DSM 4299 / JCM 9571 / NBRC 15438 / GSS1).